The chain runs to 116 residues: Vitelline membrane protein Vm32E (116 aa).

Positions 1-17 are cleaved as a signal peptide; the sequence is MKIVAFTLVAFVALAGA. Residues 36–73 form the VM domain; it reads GYPAPPCPTNYLFSCQPNLAPAPCAQEAPAYGSAGAYT.

The protein belongs to the vitelline membrane family.

Its subcellular location is the secreted. Functionally, major early eggshell protein. The protein is Vitelline membrane protein Vm32E of Drosophila santomea (Fruit fly).